The sequence spans 239 residues: Ribonuclease PH (239 aa).

Residues Arg87 and 125 to 127 (GTR) each bind phosphate.

The protein belongs to the RNase PH family. As to quaternary structure, homohexameric ring arranged as a trimer of dimers.

It catalyses the reaction tRNA(n+1) + phosphate = tRNA(n) + a ribonucleoside 5'-diphosphate. Its function is as follows. Phosphorolytic 3'-5' exoribonuclease that plays an important role in tRNA 3'-end maturation. Removes nucleotide residues following the 3'-CCA terminus of tRNAs; can also add nucleotides to the ends of RNA molecules by using nucleoside diphosphates as substrates, but this may not be physiologically important. Probably plays a role in initiation of 16S rRNA degradation (leading to ribosome degradation) during starvation. The polypeptide is Ribonuclease PH (Cellvibrio japonicus (strain Ueda107) (Pseudomonas fluorescens subsp. cellulosa)).